A 420-amino-acid polypeptide reads, in one-letter code: Argininosuccinate synthase (420 aa).

Position 23 to 31 (23 to 31 (AYSGGLDTS)) interacts with ATP. Residue tyrosine 102 participates in L-citrulline binding. Glycine 132 serves as a coordination point for ATP. Residues threonine 134, asparagine 138, and aspartate 139 each contribute to the L-aspartate site. Asparagine 138 provides a ligand contact to L-citrulline. L-citrulline-binding residues include arginine 142, serine 190, glutamate 274, and tyrosine 286.

The protein belongs to the argininosuccinate synthase family. Type 1 subfamily. As to quaternary structure, homotetramer.

It is found in the cytoplasm. The enzyme catalyses L-citrulline + L-aspartate + ATP = 2-(N(omega)-L-arginino)succinate + AMP + diphosphate + H(+). Its pathway is amino-acid biosynthesis; L-arginine biosynthesis; L-arginine from L-ornithine and carbamoyl phosphate: step 2/3. In Renibacterium salmoninarum (strain ATCC 33209 / DSM 20767 / JCM 11484 / NBRC 15589 / NCIMB 2235), this protein is Argininosuccinate synthase.